A 1227-amino-acid polypeptide reads, in one-letter code: DNA-directed RNA polymerase subunit beta (1227 aa).

It belongs to the RNA polymerase beta chain family. As to quaternary structure, the RNAP catalytic core consists of 2 alpha, 1 beta, 1 beta' and 1 omega subunit. When a sigma factor is associated with the core the holoenzyme is formed, which can initiate transcription.

The enzyme catalyses RNA(n) + a ribonucleoside 5'-triphosphate = RNA(n+1) + diphosphate. Its function is as follows. DNA-dependent RNA polymerase catalyzes the transcription of DNA into RNA using the four ribonucleoside triphosphates as substrates. The polypeptide is DNA-directed RNA polymerase subunit beta (Chloroflexus aggregans (strain MD-66 / DSM 9485)).